Consider the following 316-residue polypeptide: Ornithine carbamoyltransferase (316 aa).

Carbamoyl phosphate is bound by residues 57–60 (STRT), Gln84, Arg108, and 135–138 (HPCQ). Residues Asn166, Asp230, and 234–235 (SM) contribute to the L-ornithine site. Carbamoyl phosphate-binding positions include 269–270 (CL) and Arg297.

Belongs to the aspartate/ornithine carbamoyltransferase superfamily. OTCase family.

It is found in the cytoplasm. The catalysed reaction is carbamoyl phosphate + L-ornithine = L-citrulline + phosphate + H(+). Its pathway is amino-acid degradation; L-arginine degradation via ADI pathway; carbamoyl phosphate from L-arginine: step 2/2. Reversibly catalyzes the transfer of the carbamoyl group from carbamoyl phosphate (CP) to the N(epsilon) atom of ornithine (ORN) to produce L-citrulline. The sequence is that of Ornithine carbamoyltransferase from Bacillus cereus (strain 03BB102).